A 227-amino-acid polypeptide reads, in one-letter code: UPF0758 protein Dred_2549 (227 aa).

The region spanning 105–227 (IIRCPEDVCG…FTSLKSKGLI (123 aa)) is the MPN domain. Residues His176, His178, and Asp189 each coordinate Zn(2+). The short motif at 176 to 189 (HNHPSGDPTPSRED) is the JAMM motif element.

This sequence belongs to the UPF0758 family.

This Desulforamulus reducens (strain ATCC BAA-1160 / DSM 100696 / MI-1) (Desulfotomaculum reducens) protein is UPF0758 protein Dred_2549.